We begin with the raw amino-acid sequence, 252 residues long: Imidazole glycerol phosphate synthase subunit HisF (252 aa).

Active-site residues include D11 and D130.

The protein belongs to the HisA/HisF family. As to quaternary structure, heterodimer of HisH and HisF.

Its subcellular location is the cytoplasm. The catalysed reaction is 5-[(5-phospho-1-deoxy-D-ribulos-1-ylimino)methylamino]-1-(5-phospho-beta-D-ribosyl)imidazole-4-carboxamide + L-glutamine = D-erythro-1-(imidazol-4-yl)glycerol 3-phosphate + 5-amino-1-(5-phospho-beta-D-ribosyl)imidazole-4-carboxamide + L-glutamate + H(+). It participates in amino-acid biosynthesis; L-histidine biosynthesis; L-histidine from 5-phospho-alpha-D-ribose 1-diphosphate: step 5/9. In terms of biological role, IGPS catalyzes the conversion of PRFAR and glutamine to IGP, AICAR and glutamate. The HisF subunit catalyzes the cyclization activity that produces IGP and AICAR from PRFAR using the ammonia provided by the HisH subunit. This chain is Imidazole glycerol phosphate synthase subunit HisF, found in Staphylococcus epidermidis (strain ATCC 12228 / FDA PCI 1200).